We begin with the raw amino-acid sequence, 123 residues long: UPF0102 protein APJL_1381 (123 aa).

This sequence belongs to the UPF0102 family.

The protein is UPF0102 protein APJL_1381 of Actinobacillus pleuropneumoniae serotype 3 (strain JL03).